A 517-amino-acid chain; its full sequence is Putative alpha-L-fucosidase 1 (517 aa).

The signal sequence occupies residues 1-20; the sequence is MATILLLLLGLLVGLPLLRA. N-linked (GlcNAc...) asparagine glycans are attached at residues asparagine 119, asparagine 249, asparagine 296, asparagine 321, asparagine 352, asparagine 496, and asparagine 511.

The protein belongs to the glycosyl hydrolase 29 family.

Its subcellular location is the secreted. The protein resides in the extracellular space. It is found in the apoplast. The enzyme catalyses an alpha-L-fucoside + H2O = L-fucose + an alcohol. In terms of biological role, alpha-L-fucosidase is responsible for hydrolyzing the alpha-1,6-linked fucose joined to the reducing-end N-acetylglucosamine of the carbohydrate moieties of glycoproteins. Active only against 2'-fucosyl-lactitol when heterologously expressed. In Oryza sativa subsp. japonica (Rice), this protein is Putative alpha-L-fucosidase 1.